Consider the following 88-residue polypeptide: UPF0298 protein BC_3932 (88 aa).

This sequence belongs to the UPF0298 family.

It localises to the cytoplasm. This chain is UPF0298 protein BC_3932, found in Bacillus cereus (strain ATCC 14579 / DSM 31 / CCUG 7414 / JCM 2152 / NBRC 15305 / NCIMB 9373 / NCTC 2599 / NRRL B-3711).